We begin with the raw amino-acid sequence, 198 residues long: Small ribosomal subunit protein eS1 (198 aa).

This sequence belongs to the eukaryotic ribosomal protein eS1 family.

In Nanoarchaeum equitans (strain Kin4-M), this protein is Small ribosomal subunit protein eS1.